The following is a 292-amino-acid chain: AKT-interacting protein homolog B (292 aa).

The tract at residues 1 to 44 (MNPFWNMPSASVRKRSDNDEKIATADQKISPARSSSAKKQLPSI) is disordered. The span at 14-23 (KRSDNDEKIA) shows a compositional bias: basic and acidic residues. Residues 75-223 (YLEYSLLAEF…VVDSVKLCNS (149 aa)) enclose the UBC core domain.

The protein belongs to the ubiquitin-conjugating enzyme family. FTS subfamily.

It is found in the cytoplasm. It localises to the cell membrane. May function to promote vesicle trafficking and/or fusion. May also regulate apoptosis. This Xenopus laevis (African clawed frog) protein is AKT-interacting protein homolog B (aktip-b).